The chain runs to 253 residues: MPTLLAFLEYDGSAFFGSQIQKEEPSVALALQRGLKSMGIASKVRFSGRTDRGVHATRQAVSFEVPYKKSDWGYFKEELNKKLFPYLRVRRLYPIREGLDPRFEAKSRAYRYLLSEEPLSAFASRYVTHAHLGDERKIQEAMKLLVGWHDFALFKKSGSQEKSTLREMRRCWLYRYRSYWVFYFEANGFLRLQIRLLVGALLKVGRGEMSLEEFKEQLEAKRRFFCEGAPPYGLYLCKVSFESSIWEVRDRNH.

Residue aspartate 51 is the Nucleophile of the active site. Tyrosine 110 serves as a coordination point for substrate.

This sequence belongs to the tRNA pseudouridine synthase TruA family. Homodimer.

It catalyses the reaction uridine(38/39/40) in tRNA = pseudouridine(38/39/40) in tRNA. In terms of biological role, formation of pseudouridine at positions 38, 39 and 40 in the anticodon stem and loop of transfer RNAs. The polypeptide is tRNA pseudouridine synthase A (Wolinella succinogenes (strain ATCC 29543 / DSM 1740 / CCUG 13145 / JCM 31913 / LMG 7466 / NCTC 11488 / FDC 602W) (Vibrio succinogenes)).